The primary structure comprises 127 residues: Glycine cleavage system H protein 1 (127 aa).

The 82-residue stretch at 20-101 (LLTVGITAYA…LGEAWFFRFR (82 aa)) folds into the Lipoyl-binding domain. K60 is modified (N6-lipoyllysine).

This sequence belongs to the GcvH family. As to quaternary structure, the glycine cleavage system is composed of four proteins: P, T, L and H. It depends on (R)-lipoate as a cofactor.

Its function is as follows. The glycine cleavage system catalyzes the degradation of glycine. The H protein shuttles the methylamine group of glycine from the P protein to the T protein. This is Glycine cleavage system H protein 1 from Pseudomonas aeruginosa (strain ATCC 15692 / DSM 22644 / CIP 104116 / JCM 14847 / LMG 12228 / 1C / PRS 101 / PAO1).